Consider the following 418-residue polypeptide: L-glutamine:2-deoxy-scyllo-inosose aminotransferase (418 aa).

An N6-(pyridoxal phosphate)lysine modification is found at lysine 192.

The protein belongs to the DegT/DnrJ/EryC1 family. L-glutamine:2-deoxy-scyllo-inosose/scyllo-inosose aminotransferase subfamily. It depends on pyridoxal 5'-phosphate as a cofactor.

The catalysed reaction is 2-deoxy-L-scyllo-inosose + L-glutamine = 2-deoxy-scyllo-inosamine + 2-oxoglutaramate. It catalyses the reaction 3-amino-2,3-dideoxy-scyllo-inosose + L-glutamine = 2-deoxystreptamine + 2-oxoglutaramate. Its pathway is metabolic intermediate biosynthesis; 2-deoxystreptamine biosynthesis; 2-deoxystreptamine from D-glucose 6-phosphate: step 2/4. It functions in the pathway metabolic intermediate biosynthesis; 2-deoxystreptamine biosynthesis; 2-deoxystreptamine from D-glucose 6-phosphate: step 4/4. It participates in antibiotic biosynthesis; butirosin biosynthesis. Catalyzes the PLP-dependent transamination of 2-deoxy-scyllo-inosose (2-DOI) to form 2-deoxy-scyllo-inosamine (2-DOIA) using L-glutamine as the amino donor. Also catalyzes the transamination of 3-amino-2,3-dideoxy-scyllo-inosose (keto-2-DOIA) into 2-deoxystreptamine (2-DOS). The sequence is that of L-glutamine:2-deoxy-scyllo-inosose aminotransferase (btrR) from Niallia circulans (Bacillus circulans).